A 291-amino-acid polypeptide reads, in one-letter code: Diaminopimelate epimerase (291 aa).

Positions 13, 46, and 66 each coordinate substrate. Catalysis depends on C75, which acts as the Proton donor. Substrate-binding positions include 76–77 (GN), N170, N203, and 221–222 (ER). Catalysis depends on C230, which acts as the Proton acceptor. 231–232 (GS) is a binding site for substrate.

This sequence belongs to the diaminopimelate epimerase family. Homodimer.

It localises to the cytoplasm. The catalysed reaction is (2S,6S)-2,6-diaminopimelate = meso-2,6-diaminopimelate. It functions in the pathway amino-acid biosynthesis; L-lysine biosynthesis via DAP pathway; DL-2,6-diaminopimelate from LL-2,6-diaminopimelate: step 1/1. Its function is as follows. Catalyzes the stereoinversion of LL-2,6-diaminopimelate (L,L-DAP) to meso-diaminopimelate (meso-DAP), a precursor of L-lysine and an essential component of the bacterial peptidoglycan. The polypeptide is Diaminopimelate epimerase (Albidiferax ferrireducens (strain ATCC BAA-621 / DSM 15236 / T118) (Rhodoferax ferrireducens)).